A 1363-amino-acid chain; its full sequence is Insulin-like peptide receptor (1363 aa).

An N-terminal signal peptide occupies residues 1–29; that stretch reads MRVVDKMAGLMWAALTLVIGLGLLVPSNG. N-linked (GlcNAc...) asparagine glycans are attached at residues asparagine 51, asparagine 97, asparagine 137, asparagine 278, asparagine 483, asparagine 599, asparagine 617, asparagine 665, asparagine 666, asparagine 711, asparagine 732, asparagine 736, asparagine 743, asparagine 816, asparagine 885, and asparagine 898. 2 consecutive Fibronectin type-III domains span residues 473–586 and 590–680; these read SFSR…TDAD and HPQD…CPKS. 2 Fibronectin type-III domains span residues 712–804 and 813–912; these read ETRA…LART and IPGN…VEEE. The Extracellular segment spans residues 721-928; the sequence is ELPVTARPFY…QDPQQQVPVS (208 aa). A disordered region spans residues 739-759; sequence LPSTNRTVPPTPTPNPNPQLE. The helical transmembrane segment at 929–949 threads the bilayer; the sequence is LMIGMGVGFSLLLILAVIFGI. Over 950-1363 the chain is Cytoplasmic; that stretch reads WYCTKKRFGD…NLRIPKSTLC (414 aa). A Protein kinase domain is found at 994–1283; sequence ITLIRELGQG…EIVEILSPEL (290 aa). ATP is bound by residues 1000–1008 and lysine 1028; that span reads LGQGSFGMV. The segment at 1091 to 1117 is disordered; the sequence is PEEDVGLSDSPASNEAKNSPFAENDND. Aspartate 1148 serves as the catalytic Proton acceptor. Tyrosine 1174 is subject to Phosphotyrosine; by autocatalysis. Positions 1316-1363 are disordered; the sequence is DTETEMYPSGSEFSSTPSPPSETPYSHMNGSHPQNGSMNLRIPKSTLC. Residues 1322 to 1331 are compositionally biased toward low complexity; that stretch reads YPSGSEFSST. The segment covering 1343 to 1353 has biased composition (polar residues); it reads MNGSHPQNGSM.

It belongs to the protein kinase superfamily. Tyr protein kinase family. Insulin receptor subfamily. In terms of assembly, probable tetramer of 2 alpha and 2 beta chains linked by disulfide bonds. The alpha chains contribute to the formation of the ligand-binding domain, while the beta chains carry the kinase domain. It depends on Mn(2+) as a cofactor.

The protein localises to the membrane. The enzyme catalyses L-tyrosyl-[protein] + ATP = O-phospho-L-tyrosyl-[protein] + ADP + H(+). Its function is as follows. This receptor binds to the insulin related peptide and has a tyrosine-protein kinase activity. The protein is Insulin-like peptide receptor of Branchiostoma lanceolatum (Common lancelet).